The sequence spans 307 residues: N-acetylneuraminate lyase (307 aa).

Residues Thr-51 and Thr-52 each coordinate aceneuramate. The active-site Proton donor is the Tyr-143. The active-site Schiff-base intermediate with substrate is Lys-173. Aceneuramate contacts are provided by Ser-175, Gly-199, Asp-201, Glu-202, and Ser-218.

The protein belongs to the DapA family. NanA subfamily. As to quaternary structure, homotetramer.

It localises to the cytoplasm. It catalyses the reaction aceneuramate = aldehydo-N-acetyl-D-mannosamine + pyruvate. Its pathway is amino-sugar metabolism; N-acetylneuraminate degradation. Functionally, catalyzes the cleavage of N-acetylneuraminic acid (sialic acid) to form pyruvate and N-acetylmannosamine via a Schiff base intermediate. It prevents sialic acids from being recycled and returning to the cell surface. Involved in the N-glycolylneuraminic acid (Neu5Gc) degradation pathway. In Danio rerio (Zebrafish), this protein is N-acetylneuraminate lyase.